A 704-amino-acid chain; its full sequence is Non-sulfated chondroitin lyase E66 (704 aa).

Residues 1-23 (MSIVLIIVIVVIFLICFLYLSNS) form the signal peptide. Catalysis depends on proton acceptor residues N236 and H291. Y299 (proton donor) is an active-site residue.

Belongs to the baculoviridae E66 family.

It localises to the virion membrane. The protein resides in the host nucleus. It is found in the host cytoplasm. Functionally, component of the polyhedra envelope. Plays an essential role in oral infectivity. May digest, with its chondroitin lyase activity, the chondroitin sulfate barrier of the peritrophic matrix of the host midgut to facilitate viral infection in the epithelial cells. This Lepidoptera (butterflies and moths) protein is Non-sulfated chondroitin lyase E66 (P79).